Consider the following 545-residue polypeptide: CTP synthase (545 aa).

An amidoligase domain region spans residues 1–266; that stretch reads MKTNYIFVTG…DDYICKRFSL (266 aa). Ser-14 is a binding site for CTP. A UTP-binding site is contributed by Ser-14. ATP-binding positions include 15 to 20 and Asp-72; that span reads SLGKGI. The Mg(2+) site is built by Asp-72 and Glu-140. CTP-binding positions include 147 to 149, 187 to 192, and Lys-223; these read DIE and KTKPTQ. Residues 187–192 and Lys-223 contribute to the UTP site; that span reads KTKPTQ. An ATP-binding site is contributed by 239–241; that stretch reads KDV. One can recognise a Glutamine amidotransferase type-1 domain in the interval 291 to 542; the sequence is TIGMVGKYVE…VKAAFDYQKG (252 aa). Residue Gly-352 coordinates L-glutamine. Cys-379 acts as the Nucleophile; for glutamine hydrolysis in catalysis. L-glutamine contacts are provided by residues 380–383, Glu-403, and Arg-470; that span reads LGMQ. Active-site residues include His-515 and Glu-517.

Belongs to the CTP synthase family. Homotetramer.

It catalyses the reaction UTP + L-glutamine + ATP + H2O = CTP + L-glutamate + ADP + phosphate + 2 H(+). The catalysed reaction is L-glutamine + H2O = L-glutamate + NH4(+). It carries out the reaction UTP + NH4(+) + ATP = CTP + ADP + phosphate + 2 H(+). It participates in pyrimidine metabolism; CTP biosynthesis via de novo pathway; CTP from UDP: step 2/2. With respect to regulation, allosterically activated by GTP, when glutamine is the substrate; GTP has no effect on the reaction when ammonia is the substrate. The allosteric effector GTP functions by stabilizing the protein conformation that binds the tetrahedral intermediate(s) formed during glutamine hydrolysis. Inhibited by the product CTP, via allosteric rather than competitive inhibition. Functionally, catalyzes the ATP-dependent amination of UTP to CTP with either L-glutamine or ammonia as the source of nitrogen. Regulates intracellular CTP levels through interactions with the four ribonucleotide triphosphates. The polypeptide is CTP synthase (Proteus mirabilis (strain HI4320)).